The chain runs to 346 residues: uncharacterized protein (346 aa).

A helical membrane pass occupies residues 16 to 36; the sequence is ILGIIICIILIVGFFISFDST.

The protein resides in the membrane. This is an uncharacterized protein from Methanocaldococcus jannaschii (strain ATCC 43067 / DSM 2661 / JAL-1 / JCM 10045 / NBRC 100440) (Methanococcus jannaschii).